Consider the following 423-residue polypeptide: Serine--tRNA ligase (423 aa).

230-232 (TAE) serves as a coordination point for L-serine. 261 to 263 (RSE) contributes to the ATP binding site. Glutamate 284 contributes to the L-serine binding site. 348 to 351 (EISS) contributes to the ATP binding site. Serine 384 is an L-serine binding site.

This sequence belongs to the class-II aminoacyl-tRNA synthetase family. Type-1 seryl-tRNA synthetase subfamily. As to quaternary structure, homodimer. The tRNA molecule binds across the dimer.

Its subcellular location is the cytoplasm. The enzyme catalyses tRNA(Ser) + L-serine + ATP = L-seryl-tRNA(Ser) + AMP + diphosphate + H(+). It carries out the reaction tRNA(Sec) + L-serine + ATP = L-seryl-tRNA(Sec) + AMP + diphosphate + H(+). The protein operates within aminoacyl-tRNA biosynthesis; selenocysteinyl-tRNA(Sec) biosynthesis; L-seryl-tRNA(Sec) from L-serine and tRNA(Sec): step 1/1. Its function is as follows. Catalyzes the attachment of serine to tRNA(Ser). Is also able to aminoacylate tRNA(Sec) with serine, to form the misacylated tRNA L-seryl-tRNA(Sec), which will be further converted into selenocysteinyl-tRNA(Sec). The protein is Serine--tRNA ligase of Syntrophobacter fumaroxidans (strain DSM 10017 / MPOB).